Reading from the N-terminus, the 448-residue chain is Phosphoglucosamine mutase (448 aa).

Catalysis depends on Ser100, which acts as the Phosphoserine intermediate. Residues Ser100, Asp240, Asp242, and Asp244 each contribute to the Mg(2+) site. Position 100 is a phosphoserine (Ser100).

This sequence belongs to the phosphohexose mutase family. Mg(2+) serves as cofactor. Post-translationally, activated by phosphorylation.

The catalysed reaction is alpha-D-glucosamine 1-phosphate = D-glucosamine 6-phosphate. Functionally, catalyzes the conversion of glucosamine-6-phosphate to glucosamine-1-phosphate. The sequence is that of Phosphoglucosamine mutase from Bacillus licheniformis (strain ATCC 14580 / DSM 13 / JCM 2505 / CCUG 7422 / NBRC 12200 / NCIMB 9375 / NCTC 10341 / NRRL NRS-1264 / Gibson 46).